The sequence spans 161 residues: MVSAVYPGTFDPMTRGHEDLVRRASNIFDELVVGVAHSPNKRPFFSLEERISIAREVLGHYPNVRVEGFSGLLKDFVRKNNARVIVRGLRAVSDFEYEFQMAGMNRYLLPDVETMFLTPSDQYQFISGTFVREIAVLGGDVSKFVFPSVERWLQEKIAKPE.

T9 is a substrate binding site. Residues 9–10 (TF) and H17 contribute to the ATP site. Positions 41, 73, and 87 each coordinate substrate. ATP is bound by residues 88-90 (GLR), E98, and 123-129 (YQFISGT).

It belongs to the bacterial CoaD family. Homohexamer. Mg(2+) serves as cofactor.

It localises to the cytoplasm. It carries out the reaction (R)-4'-phosphopantetheine + ATP + H(+) = 3'-dephospho-CoA + diphosphate. It functions in the pathway cofactor biosynthesis; coenzyme A biosynthesis; CoA from (R)-pantothenate: step 4/5. Reversibly transfers an adenylyl group from ATP to 4'-phosphopantetheine, yielding dephospho-CoA (dPCoA) and pyrophosphate. The sequence is that of Phosphopantetheine adenylyltransferase from Cupriavidus taiwanensis (strain DSM 17343 / BCRC 17206 / CCUG 44338 / CIP 107171 / LMG 19424 / R1) (Ralstonia taiwanensis (strain LMG 19424)).